The sequence spans 447 residues: Tubulin beta chain (447 aa).

Residues Gln11, Glu69, Ser138, Gly142, Thr143, Gly144, Asn204, and Asn226 each coordinate GTP. Mg(2+) is bound at residue Glu69. The segment at 424–447 (QYQDASISEGEEDYEEEPQVENEE) is disordered. Over residues 432–447 (EGEEDYEEEPQVENEE) the composition is skewed to acidic residues.

Belongs to the tubulin family. In terms of assembly, dimer of alpha and beta chains. A typical microtubule is a hollow water-filled tube with an outer diameter of 25 nm and an inner diameter of 15 nM. Alpha-beta heterodimers associate head-to-tail to form protofilaments running lengthwise along the microtubule wall with the beta-tubulin subunit facing the microtubule plus end conferring a structural polarity. Microtubules usually have 13 protofilaments but different protofilament numbers can be found in some organisms and specialized cells. Requires Mg(2+) as cofactor.

It localises to the cytoplasm. The protein resides in the cytoskeleton. Functionally, tubulin is the major constituent of microtubules, a cylinder consisting of laterally associated linear protofilaments composed of alpha- and beta-tubulin heterodimers. Microtubules grow by the addition of GTP-tubulin dimers to the microtubule end, where a stabilizing cap forms. Below the cap, tubulin dimers are in GDP-bound state, owing to GTPase activity of alpha-tubulin. This is Tubulin beta chain from Uncinula necator (Grape powdery mildew).